The primary structure comprises 250 residues: 5'-nucleotidase SurE (250 aa).

A divalent metal cation is bound by residues D8, D9, S40, and N95.

The protein belongs to the SurE nucleotidase family. The cofactor is a divalent metal cation.

The protein resides in the cytoplasm. The enzyme catalyses a ribonucleoside 5'-phosphate + H2O = a ribonucleoside + phosphate. In terms of biological role, nucleotidase that shows phosphatase activity on nucleoside 5'-monophosphates. The polypeptide is 5'-nucleotidase SurE (Nitratidesulfovibrio vulgaris (strain ATCC 29579 / DSM 644 / CCUG 34227 / NCIMB 8303 / VKM B-1760 / Hildenborough) (Desulfovibrio vulgaris)).